The primary structure comprises 166 residues: Lymphocyte antigen 6G6e (166 aa).

The signal sequence occupies residues Met-1–Gly-18. One can recognise a UPAR/Ly6 domain in the interval Leu-28 to Leu-151. 4 disulfides stabilise this stretch: Cys-30/Cys-52, Cys-33/Cys-39, Cys-110/Cys-129, and Cys-130/Cys-135.

Interacts with CHRNA4. O-glycosylated. Contains sialic acid residues.

The protein localises to the cell surface. The protein resides in the cell membrane. It is found in the cell projection. Functionally, believed to act as a modulator of nicotinic acetylcholine receptors (nAChRs) activity. In vitro potentiates alpha-3:beta-4-containing nAChRs maximum response by increasing peak current and slowing down receptor desensitization; the activity is dependent on its cell surface localization. The sequence is that of Lymphocyte antigen 6G6e (Ly6g6e) from Mus musculus (Mouse).